A 278-amino-acid polypeptide reads, in one-letter code: HTH-type transcriptional activator RhaS (278 aa).

One can recognise an HTH araC/xylS-type domain in the interval 174–272 (NLLLAWLEDH…NWSPRDIRQG (99 aa)). 2 DNA-binding regions (H-T-H motif) span residues 191–212 (DAVADQFSLSLRTLHRQLKQQT) and 239–262 (VTDIAYRCGFSDSNHFSTLFRREF).

As to quaternary structure, binds DNA as a dimer.

It is found in the cytoplasm. Its function is as follows. Activates expression of the rhaBAD and rhaT operons. The polypeptide is HTH-type transcriptional activator RhaS (Shigella flexneri serotype 5b (strain 8401)).